A 123-amino-acid chain; its full sequence is UPF0738 protein BALH_1059 (123 aa).

This sequence belongs to the UPF0738 family.

This is UPF0738 protein BALH_1059 from Bacillus thuringiensis (strain Al Hakam).